Reading from the N-terminus, the 62-residue chain is Photosystem II reaction center protein Z (62 aa).

Helical transmembrane passes span 8 to 28 and 41 to 61; these read AVFA…VVFA and FSGT…NSLI.

Belongs to the PsbZ family. In terms of assembly, PSII is composed of 1 copy each of membrane proteins PsbA, PsbB, PsbC, PsbD, PsbE, PsbF, PsbH, PsbI, PsbJ, PsbK, PsbL, PsbM, PsbT, PsbY, PsbZ, Psb30/Ycf12, at least 3 peripheral proteins of the oxygen-evolving complex and a large number of cofactors. It forms dimeric complexes.

The protein localises to the plastid. The protein resides in the chloroplast thylakoid membrane. In terms of biological role, may control the interaction of photosystem II (PSII) cores with the light-harvesting antenna, regulates electron flow through the 2 photosystem reaction centers. PSII is a light-driven water plastoquinone oxidoreductase, using light energy to abstract electrons from H(2)O, generating a proton gradient subsequently used for ATP formation. This Liriodendron tulipifera (Tuliptree) protein is Photosystem II reaction center protein Z.